A 1161-amino-acid polypeptide reads, in one-letter code: Cingulin (1161 aa).

Positions 1–403 (MSSLSADRKP…SLIHERFCGV (403 aa)) are head. Disordered stretches follow at residues 29–53 (GGFP…SPSK), 79–309 (SYGV…LGRD), 649–678 (QSEL…KRET), 699–721 (SKAI…ESNL), 739–773 (RLHS…AASR), and 1123–1161 (QSRR…TTSC). A ZIM motif is present at residues 51–65 (PSKYGVAVRVQGISG). Polar residues-rich tracts occupy residues 84-104 (LKTQ…SPYN) and 117-129 (PQGS…QPSS). Over residues 189 to 203 (NGIGSSLNGTGLNGS) the composition is skewed to low complexity. Residues 273 to 305 (EASSTSPTINPYAPNTSATVPKLNSTKPSSTGS) show a composition bias toward polar residues. A coiled-coil region spans residues 413-1128 (SNMKTELEQA…RKIQQSRRST (716 aa)). A compositionally biased stretch (low complexity) spans 742-751 (SSVPDSSSSD). Basic and acidic residues predominate over residues 755–773 (EENRSLKTQLEESRRAASR). The interval 1122-1161 (QQSRRSTLGSTLSSDEEDNYSDTKSITSILTDSPLQTTSC) is tail. Residues 1124–1134 (SRRSTLGSTLS) show a composition bias toward low complexity. Residues 1143-1161 (DTKSITSILTDSPLQTTSC) are compositionally biased toward polar residues.

It belongs to the cingulin family. Homodimer.

It is found in the cell junction. The protein resides in the tight junction. In terms of biological role, probably plays a role in the formation and regulation of the tight junction (TJ) paracellular permeability barrier. Note=Localizes to the apical junction complex composed of tight and adherens junctions. The sequence is that of Cingulin from Danio rerio (Zebrafish).